The sequence spans 354 residues: Uroporphyrinogen decarboxylase (354 aa).

Substrate contacts are provided by residues 27–31 (RQAGR), D77, Y154, T209, and H327.

It belongs to the uroporphyrinogen decarboxylase family. In terms of assembly, homodimer.

It localises to the cytoplasm. It carries out the reaction uroporphyrinogen III + 4 H(+) = coproporphyrinogen III + 4 CO2. It participates in porphyrin-containing compound metabolism; protoporphyrin-IX biosynthesis; coproporphyrinogen-III from 5-aminolevulinate: step 4/4. Its function is as follows. Catalyzes the decarboxylation of four acetate groups of uroporphyrinogen-III to yield coproporphyrinogen-III. The protein is Uroporphyrinogen decarboxylase of Pectobacterium atrosepticum (strain SCRI 1043 / ATCC BAA-672) (Erwinia carotovora subsp. atroseptica).